A 250-amino-acid polypeptide reads, in one-letter code: NAD(P)H-quinone oxidoreductase subunit K, chloroplastic (250 aa).

Cysteine 67, cysteine 68, cysteine 132, and cysteine 163 together coordinate [4Fe-4S] cluster.

It belongs to the complex I 20 kDa subunit family. As to quaternary structure, NDH is composed of at least 16 different subunits, 5 of which are encoded in the nucleus. The cofactor is [4Fe-4S] cluster.

Its subcellular location is the plastid. The protein resides in the chloroplast thylakoid membrane. It carries out the reaction a plastoquinone + NADH + (n+1) H(+)(in) = a plastoquinol + NAD(+) + n H(+)(out). The catalysed reaction is a plastoquinone + NADPH + (n+1) H(+)(in) = a plastoquinol + NADP(+) + n H(+)(out). Its function is as follows. NDH shuttles electrons from NAD(P)H:plastoquinone, via FMN and iron-sulfur (Fe-S) centers, to quinones in the photosynthetic chain and possibly in a chloroplast respiratory chain. The immediate electron acceptor for the enzyme in this species is believed to be plastoquinone. Couples the redox reaction to proton translocation, and thus conserves the redox energy in a proton gradient. This Adiantum capillus-veneris (Maidenhair fern) protein is NAD(P)H-quinone oxidoreductase subunit K, chloroplastic.